The primary structure comprises 180 residues: UPF0134 protein MPN_127 (180 aa).

Belongs to the UPF0134 family.

In Mycoplasma pneumoniae (strain ATCC 29342 / M129 / Subtype 1) (Mycoplasmoides pneumoniae), this protein is UPF0134 protein MPN_127.